Here is a 215-residue protein sequence, read N- to C-terminus: MGVRAQQKEKTRRSLVEAAFSQLSAERSFASLSLREVAREAGIAPTSFYRHFRDVDELGLTMVDESGLMLRQLMRQARQRIAKGGSVIRTSVSTFMEFIGNNPNAFRLLLRERSGTSAAFRAAVAREIQHFIAELADYLELENHMPRAFTEAQAEAMVTIVFSAGAEALDVGVEQRRQLEERLVLQLRMISKGAYYWYRREQEKTTIIPGNVKDE.

One can recognise an HTH tetR-type domain in the interval 10–70 (KTRRSLVEAA…TMVDESGLML (61 aa)). Positions 33 to 52 (SLREVAREAGIAPTSFYRHF) form a DNA-binding region, H-T-H motif.

In terms of assembly, homodimer.

Its subcellular location is the cytoplasm. Represses the transcription of fabB, involved in unsaturated fatty acid (UFA) biosynthesis. By controlling UFA production, FabR directly influences the physical properties of the membrane bilayer. The polypeptide is HTH-type transcriptional repressor FabR (Escherichia coli O1:K1 / APEC).